The primary structure comprises 283 residues: Probable endonuclease 4 (283 aa).

Histidine 66, histidine 106, glutamate 141, aspartate 174, histidine 177, histidine 211, aspartate 224, histidine 226, and glutamate 256 together coordinate Zn(2+).

It belongs to the AP endonuclease 2 family. It depends on Zn(2+) as a cofactor.

It catalyses the reaction Endonucleolytic cleavage to 5'-phosphooligonucleotide end-products.. Its function is as follows. Endonuclease IV plays a role in DNA repair. It cleaves phosphodiester bonds at apurinic or apyrimidinic (AP) sites, generating a 3'-hydroxyl group and a 5'-terminal sugar phosphate. The chain is Probable endonuclease 4 from Carboxydothermus hydrogenoformans (strain ATCC BAA-161 / DSM 6008 / Z-2901).